The sequence spans 385 residues: uncharacterized protein (385 aa).

This is an uncharacterized protein from Caenorhabditis elegans.